The chain runs to 354 residues: Holliday junction branch migration complex subunit RuvB (354 aa).

Residues 5–197 (TDDFSAADLP…FGIVARLEFY (193 aa)) form a large ATPase domain (RuvB-L) region. Residues Leu-36, Arg-37, Gly-78, Lys-81, Thr-82, Thr-83, 144–146 (EDY), Arg-187, Tyr-197, and Arg-234 each bind ATP. Thr-82 is a binding site for Mg(2+). The small ATPAse domain (RuvB-S) stretch occupies residues 198–268 (TAEELGRIVR…IANKALAMLD (71 aa)). Residues 271–354 (PQGFDVMDRK…PPVSGNDMFT (84 aa)) are head domain (RuvB-H). Residues Arg-307, Arg-326, and Arg-331 each coordinate DNA.

Belongs to the RuvB family. As to quaternary structure, homohexamer. Forms an RuvA(8)-RuvB(12)-Holliday junction (HJ) complex. HJ DNA is sandwiched between 2 RuvA tetramers; dsDNA enters through RuvA and exits via RuvB. An RuvB hexamer assembles on each DNA strand where it exits the tetramer. Each RuvB hexamer is contacted by two RuvA subunits (via domain III) on 2 adjacent RuvB subunits; this complex drives branch migration. In the full resolvosome a probable DNA-RuvA(4)-RuvB(12)-RuvC(2) complex forms which resolves the HJ.

The protein localises to the cytoplasm. The catalysed reaction is ATP + H2O = ADP + phosphate + H(+). In terms of biological role, the RuvA-RuvB-RuvC complex processes Holliday junction (HJ) DNA during genetic recombination and DNA repair, while the RuvA-RuvB complex plays an important role in the rescue of blocked DNA replication forks via replication fork reversal (RFR). RuvA specifically binds to HJ cruciform DNA, conferring on it an open structure. The RuvB hexamer acts as an ATP-dependent pump, pulling dsDNA into and through the RuvAB complex. RuvB forms 2 homohexamers on either side of HJ DNA bound by 1 or 2 RuvA tetramers; 4 subunits per hexamer contact DNA at a time. Coordinated motions by a converter formed by DNA-disengaged RuvB subunits stimulates ATP hydrolysis and nucleotide exchange. Immobilization of the converter enables RuvB to convert the ATP-contained energy into a lever motion, pulling 2 nucleotides of DNA out of the RuvA tetramer per ATP hydrolyzed, thus driving DNA branch migration. The RuvB motors rotate together with the DNA substrate, which together with the progressing nucleotide cycle form the mechanistic basis for DNA recombination by continuous HJ branch migration. Branch migration allows RuvC to scan DNA until it finds its consensus sequence, where it cleaves and resolves cruciform DNA. This Polaromonas sp. (strain JS666 / ATCC BAA-500) protein is Holliday junction branch migration complex subunit RuvB.